Consider the following 305-residue polypeptide: tRNA pseudouridine synthase B (305 aa).

Asp48 functions as the Nucleophile in the catalytic mechanism.

Belongs to the pseudouridine synthase TruB family. Type 1 subfamily.

The catalysed reaction is uridine(55) in tRNA = pseudouridine(55) in tRNA. In terms of biological role, responsible for synthesis of pseudouridine from uracil-55 in the psi GC loop of transfer RNAs. This is tRNA pseudouridine synthase B from Mannheimia succiniciproducens (strain KCTC 0769BP / MBEL55E).